We begin with the raw amino-acid sequence, 441 residues long: Peroxisome proliferator-activated receptor delta (441 aa).

Positions 1–22 (MEQPQEEAPEVREEEEKEEVAE) are enriched in acidic residues. Positions 1–54 (MEQPQEEAPEVREEEEKEEVAEAEGAPELNGGPQHALPSSSYTDLSRSSSPPSL) are disordered. Over residues 37–54 (LPSSSYTDLSRSSSPPSL) the composition is skewed to low complexity. A DNA-binding region (nuclear receptor) is located at residues 71 to 145 (NMECRVCGDK…LGMSHNAIRF (75 aa)). 2 NR C4-type zinc fingers span residues 74–94 (CRVC…CEGC) and 111–133 (CERS…FQKC). Positions 211–439 (FVIHDIETLW…HPLLQEIYKD (229 aa)) constitute an NR LBD domain.

It belongs to the nuclear hormone receptor family. NR1 subfamily. As to quaternary structure, heterodimer with the retinoid X receptor. Interacts (via domain NR LBD) with CRY1 and CRY2 in a ligand-dependent manner. Post-translationally, 'Lys-48'-linked polyubiquitinated; leading to proteasomal degradation. Deubiquitinated and stabilized by OTUD3. Ubiquitous with maximal levels in placenta and skeletal muscle.

Its subcellular location is the nucleus. Functionally, ligand-activated transcription factor key mediator of energy metabolism in adipose tissues. Receptor that binds peroxisome proliferators such as hypolipidemic drugs and fatty acids. Has a preference for poly-unsaturated fatty acids, such as gamma-linoleic acid and eicosapentanoic acid. Once activated by a ligand, the receptor binds to promoter elements of target genes. Regulates the peroxisomal beta-oxidation pathway of fatty acids. Functions as transcription activator for the acyl-CoA oxidase gene. Decreases expression of NPC1L1 once activated by a ligand. This is Peroxisome proliferator-activated receptor delta from Homo sapiens (Human).